The sequence spans 938 residues: Glutamate receptor 3.1 (938 aa).

A signal peptide spans 1 to 20 (MKFIFYLFSIFCCLCSCAQS). Residues 21-588 (QNISGRPDAV…GGWAFLQPFT (568 aa)) lie on the Extracellular side of the membrane. N-linked (GlcNAc...) asparagine glycosylation is found at asparagine 22, asparagine 39, asparagine 59, asparagine 340, asparagine 418, asparagine 436, and asparagine 551. A helical membrane pass occupies residues 589–609 (IKMWTVTGLFFLIIGTVVWML). The Cytoplasmic segment spans residues 610–618 (EHRINDEFR). A helical transmembrane segment spans residues 619–639 (GPPAKQLITVFWFSFSTLFFA). The Cytoplasmic portion of the chain corresponds to 640–650 (HREDTRSTLGR). The helical transmembrane segment at 651-671 (FVIIIWLFVVLIIQSSYTASL) threads the bilayer. At 672–830 (TSILTVQQLT…ELDQDPDRLD (159 aa)) the chain is on the extracellular side. Residues 831-851 (VYSFSALFLICGLACIFALAI) form a helical membrane-spanning segment. The Cytoplasmic portion of the chain corresponds to 852–938 (HACNLFYQYS…SGSGSTTASC (87 aa)). The disordered stretch occupies residues 906–938 (AAKEKASGLGGSGGSMSGVSFTSSGSGSTTASC). Residues 922–938 (SGVSFTSSGSGSTTASC) show a composition bias toward low complexity.

The protein belongs to the glutamate-gated ion channel (TC 1.A.10.1) family. In terms of assembly, may form homomultimers. As to expression, expressed at low levels in roots and leaves.

The protein resides in the membrane. Glutamate-gated receptor that probably acts as a non-selective cation channel. Involved in root development. May regulate cell proliferation and cell death in the root apex. The protein is Glutamate receptor 3.1 (GLR3.1) of Oryza sativa subsp. japonica (Rice).